The primary structure comprises 396 residues: Elongation factor Tu (396 aa).

A tr-type G domain is found at 10 to 206 (KPHVNVGTIG…ALDSYIPTPE (197 aa)). The tract at residues 19–26 (GHVDHGKT) is G1. 19 to 26 (GHVDHGKT) contacts GTP. Residue Thr-26 participates in Mg(2+) binding. Residues 60–64 (GITIN) are G2. A G3 region spans residues 81–84 (DCPG). GTP-binding positions include 81-85 (DCPGH) and 136-139 (NKCD). Positions 136–139 (NKCD) are G4. Residues 174-176 (SAK) form a G5 region.

The protein belongs to the TRAFAC class translation factor GTPase superfamily. Classic translation factor GTPase family. EF-Tu/EF-1A subfamily. Monomer.

It localises to the cytoplasm. It catalyses the reaction GTP + H2O = GDP + phosphate + H(+). GTP hydrolase that promotes the GTP-dependent binding of aminoacyl-tRNA to the A-site of ribosomes during protein biosynthesis. In Ralstonia nicotianae (strain ATCC BAA-1114 / GMI1000) (Ralstonia solanacearum), this protein is Elongation factor Tu.